The following is a 41-amino-acid chain: Photosystem I reaction center subunit IX (41 aa).

A helical transmembrane segment spans residues 7-27; it reads YLSTAPVVAFAWLTFTAGFII.

It belongs to the PsaJ family.

It localises to the plastid. Its subcellular location is the chloroplast thylakoid membrane. Its function is as follows. May help in the organization of the PsaE and PsaF subunits. In Stigeoclonium helveticum (Green alga), this protein is Photosystem I reaction center subunit IX.